Here is a 651-residue protein sequence, read N- to C-terminus: MSEVHVHRVQPAWKKNALIDNDTYLKWYADSIKNPDKFWGKHGKRIDWFKPFSKVKNTSFDGKVSIKWFEDGLTNVSYNCIDRHLKKRGDQTAIIWEGDNPYDDKKITYNELYERVCRLANVMKKHGVKKGDRVTIYMPMIPEAAYAMLACTRIGAIHSIVFGGFSPDALAGRIVDCESTFVITADEGLRGGKSIPLKENTDKAIDIAAKNFVMVKNVLVVRRTGGKVGWAPGRDLWYHDEVATVKAECKPEKMKAEDPLFILYTSGSTGKPKGVLHTTAGYLVYASMTHQYVFDYHDGDIYWCTADVGWVTGHSYIVYGPLANGATTLMFEGVPNYPSQSRFWEVIDKHKVNIFYTAPTALRALMGAGNDPVKKTSRKSLRVLGSVGEPINPEAWEWYFNVVGNGKVPIVDTWWQTETGGILITPLPGATDLKAGSATRPFFGVKPQLVDGEGKVLEGAADGNLCITDSWPGQMRTVYGDHDRFVQTYFSTYKGKYFTGDGCRRDADGYYWITGRVDDVINVSGHRMGTAEVESALVSHDKVSEAAVVGYPHDIKGQGIYSYVTLMKGEEPTEDLRKELIAHVRKEIGAIASPDKIQFAPGLPKTRSGKIMRRILRKIAEDDFSTLGDTSTLADPAVVDDLIANRQNKKG.

CoA is bound by residues Arg-190–Lys-193, Thr-312, and Asn-336. Residues Gly-388–Pro-390, Asp-412–Thr-417, Asp-501, and Arg-516 contribute to the ATP site. Residue Ser-524 coordinates CoA. Arg-527 lines the ATP pocket. Mg(2+) contacts are provided by Val-538, His-540, and Val-543. CoA is bound at residue Arg-585. Position 610 is an N6-acetyllysine (Lys-610).

Belongs to the ATP-dependent AMP-binding enzyme family. It depends on Mg(2+) as a cofactor. Acetylated. Deacetylation by the SIR2-homolog deacetylase activates the enzyme.

The catalysed reaction is acetate + ATP + CoA = acetyl-CoA + AMP + diphosphate. Functionally, catalyzes the conversion of acetate into acetyl-CoA (AcCoA), an essential intermediate at the junction of anabolic and catabolic pathways. AcsA undergoes a two-step reaction. In the first half reaction, AcsA combines acetate with ATP to form acetyl-adenylate (AcAMP) intermediate. In the second half reaction, it can then transfer the acetyl group from AcAMP to the sulfhydryl group of CoA, forming the product AcCoA. The chain is Acetyl-coenzyme A synthetase from Mesorhizobium japonicum (strain LMG 29417 / CECT 9101 / MAFF 303099) (Mesorhizobium loti (strain MAFF 303099)).